Consider the following 122-residue polypeptide: Small ribosomal subunit protein uS13 (122 aa).

Residues 94–122 are disordered; the sequence is SLPVRGQRTKTNARTRKVHVSRSKNSRGK.

It belongs to the universal ribosomal protein uS13 family. Part of the 30S ribosomal subunit. Forms a loose heterodimer with protein S19. Forms two bridges to the 50S subunit in the 70S ribosome.

In terms of biological role, located at the top of the head of the 30S subunit, it contacts several helices of the 16S rRNA. In the 70S ribosome it contacts the 23S rRNA (bridge B1a) and protein L5 of the 50S subunit (bridge B1b), connecting the 2 subunits; these bridges are implicated in subunit movement. Contacts the tRNAs in the A and P-sites. The polypeptide is Small ribosomal subunit protein uS13 (Haemophilus influenzae (strain ATCC 51907 / DSM 11121 / KW20 / Rd)).